The primary structure comprises 272 residues: 3-methyl-2-oxobutanoate hydroxymethyltransferase (272 aa).

Residues aspartate 52 and aspartate 91 each contribute to the Mg(2+) site. 3-methyl-2-oxobutanoate-binding positions include 52-53 (DS), aspartate 91, and lysine 121. Residue glutamate 123 coordinates Mg(2+). Glutamate 190 functions as the Proton acceptor in the catalytic mechanism.

Belongs to the PanB family. As to quaternary structure, homodecamer; pentamer of dimers. It depends on Mg(2+) as a cofactor.

Its subcellular location is the cytoplasm. The catalysed reaction is 3-methyl-2-oxobutanoate + (6R)-5,10-methylene-5,6,7,8-tetrahydrofolate + H2O = 2-dehydropantoate + (6S)-5,6,7,8-tetrahydrofolate. It participates in cofactor biosynthesis; (R)-pantothenate biosynthesis; (R)-pantoate from 3-methyl-2-oxobutanoate: step 1/2. In terms of biological role, catalyzes the reversible reaction in which hydroxymethyl group from 5,10-methylenetetrahydrofolate is transferred onto alpha-ketoisovalerate to form ketopantoate. This Cytophaga hutchinsonii (strain ATCC 33406 / DSM 1761 / CIP 103989 / NBRC 15051 / NCIMB 9469 / D465) protein is 3-methyl-2-oxobutanoate hydroxymethyltransferase.